The chain runs to 124 residues: S-adenosylmethionine decarboxylase proenzyme (124 aa).

Serine 63 functions as the Schiff-base intermediate with substrate; via pyruvic acid in the catalytic mechanism. Residue serine 63 is modified to Pyruvic acid (Ser); by autocatalysis. Histidine 68 acts as the Proton acceptor; for processing activity in catalysis. The Proton donor; for catalytic activity role is filled by cysteine 83.

It belongs to the prokaryotic AdoMetDC family. Type 1 subfamily. Heterotetramer of two alpha and two beta chains arranged as a dimer of alpha/beta heterodimers. Requires pyruvate as cofactor. Is synthesized initially as an inactive proenzyme. Formation of the active enzyme involves a self-maturation process in which the active site pyruvoyl group is generated from an internal serine residue via an autocatalytic post-translational modification. Two non-identical subunits are generated from the proenzyme in this reaction, and the pyruvate is formed at the N-terminus of the alpha chain, which is derived from the carboxyl end of the proenzyme. The post-translation cleavage follows an unusual pathway, termed non-hydrolytic serinolysis, in which the side chain hydroxyl group of the serine supplies its oxygen atom to form the C-terminus of the beta chain, while the remainder of the serine residue undergoes an oxidative deamination to produce ammonia and the pyruvoyl group blocking the N-terminus of the alpha chain.

It carries out the reaction S-adenosyl-L-methionine + H(+) = S-adenosyl 3-(methylsulfanyl)propylamine + CO2. It participates in amine and polyamine biosynthesis; S-adenosylmethioninamine biosynthesis; S-adenosylmethioninamine from S-adenosyl-L-methionine: step 1/1. Its function is as follows. Catalyzes the decarboxylation of S-adenosylmethionine to S-adenosylmethioninamine (dcAdoMet), the propylamine donor required for the synthesis of the polyamines spermine and spermidine from the diamine putrescine. This chain is S-adenosylmethionine decarboxylase proenzyme, found in Acetivibrio thermocellus (strain ATCC 27405 / DSM 1237 / JCM 9322 / NBRC 103400 / NCIMB 10682 / NRRL B-4536 / VPI 7372) (Clostridium thermocellum).